We begin with the raw amino-acid sequence, 306 residues long: Ribonuclease H2 subunit B (306 aa).

Residues 232–285 form a disordered region; it reads LPDLSSPTPEPPVKKRKVSEAPVEAEEDYTKFNSDSKNKKSNSKMTAAQKSLAK. Over residues 259 to 269 the composition is skewed to basic and acidic residues; it reads DYTKFNSDSKN.

It belongs to the RNase H2 subunit B family. In terms of assembly, the RNase H2 complex is a heterotrimer composed of the catalytic subunit rnaseh2a and the non-catalytic subunits rnaseh2b and rnaseh2c.

The protein localises to the nucleus. Its function is as follows. Non catalytic subunit of RNase H2, an endonuclease that specifically degrades the RNA of RNA:DNA hybrids. Participates in DNA replication, possibly by mediating the removal of lagging-strand Okazaki fragment RNA primers during DNA replication. Mediates the excision of single ribonucleotides from DNA:RNA duplexes. The chain is Ribonuclease H2 subunit B (rnaseh2b) from Xenopus tropicalis (Western clawed frog).